Here is a 173-residue protein sequence, read N- to C-terminus: Ribosome maturation factor RimM (173 aa).

Positions 95-169 constitute a PRC barrel domain; sequence PDEFYDHELE…TIVIDPPEGL (75 aa).

It belongs to the RimM family. In terms of assembly, binds ribosomal protein uS19.

It is found in the cytoplasm. Functionally, an accessory protein needed during the final step in the assembly of 30S ribosomal subunit, possibly for assembly of the head region. Essential for efficient processing of 16S rRNA. May be needed both before and after RbfA during the maturation of 16S rRNA. It has affinity for free ribosomal 30S subunits but not for 70S ribosomes. The chain is Ribosome maturation factor RimM from Mycolicibacterium smegmatis (strain ATCC 700084 / mc(2)155) (Mycobacterium smegmatis).